The following is a 400-amino-acid chain: Large envelope protein (400 aa).

Residue M1 is modified to N-acetylmethionine. G2 is lipidated: N-myristoyl glycine; by host. The segment at G2–A119 is pre-S1. Residues G2–N174 form a pre-S region. Over G2–G181 the chain is Virion surface; in external conformation. Residues G2–R253 are Intravirion; in internal conformation-facing. P4 is a glycosylation site (N-linked (GlcNAc...) asparagine). Residues V84–D114 are disordered. Residues M120–N174 are pre-S2. Residues L182 to I202 form a helical membrane-spanning segment. The Intravirion; in external conformation portion of the chain corresponds to P203–R253. The chain crosses the membrane as a helical span at residues F254–Y274. The Virion surface portion of the chain corresponds to Q275–S348. Residue N320 is glycosylated (N-linked (GlcNAc...) asparagine; by host). Residues L349–I369 traverse the membrane as a helical segment. Residues W370–W375 are Intravirion-facing. The helical transmembrane segment at G376–V398 threads the bilayer. Residues S399–I400 lie on the Virion surface side of the membrane.

It belongs to the orthohepadnavirus major surface antigen family. In terms of assembly, in its internal form (Li-HBsAg), interacts with the capsid protein and with the isoform S. Interacts with host chaperone CANX. As to quaternary structure, associates with host chaperone CANX through its pre-S2 N glycan; this association may be essential for isoform M proper secretion. Interacts with isoform L. Interacts with the antigens of satellite virus HDV (HDVAgs); this interaction is required for encapsidation of HDV genomic RNA. Isoform M is N-terminally acetylated by host at a ratio of 90%, and N-glycosylated by host at the pre-S2 region. In terms of processing, myristoylated.

It localises to the virion membrane. Its function is as follows. The large envelope protein exists in two topological conformations, one which is termed 'external' or Le-HBsAg and the other 'internal' or Li-HBsAg. In its external conformation the protein attaches the virus to cell receptors and thereby initiating infection. This interaction determines the species specificity and liver tropism. This attachment induces virion internalization predominantly through caveolin-mediated endocytosis. The large envelope protein also assures fusion between virion membrane and endosomal membrane. In its internal conformation the protein plays a role in virion morphogenesis and mediates the contact with the nucleocapsid like a matrix protein. In terms of biological role, the middle envelope protein plays an important role in the budding of the virion. It is involved in the induction of budding in a nucleocapsid independent way. In this process the majority of envelope proteins bud to form subviral lipoprotein particles of 22 nm of diameter that do not contain a nucleocapsid. The chain is Large envelope protein from Homo sapiens (Human).